A 200-amino-acid polypeptide reads, in one-letter code: Cysteine-rich venom protein VAR8 (200 aa).

The first 22 residues, 1-22, serve as a signal peptide directing secretion; sequence MILLKLYLTLAAILCQSRGTTS. Residues 41-169 enclose the SCP domain; that stretch reads NKHNDLRRTV…PLKYFLVCQY (129 aa). Cystine bridges form between C77-C156, C95-C170, C151-C167, and C189-C196.

Belongs to the CRISP family. Contains 8 disulfide bonds. Expressed by the venom gland.

It is found in the secreted. Functionally, blocks ryanodine receptors, and potassium channels. This is Cysteine-rich venom protein VAR8 from Varanus acanthurus (Ridge-tailed monitor).